A 156-amino-acid polypeptide reads, in one-letter code: Arginine repressor (156 aa).

It belongs to the ArgR family.

The protein resides in the cytoplasm. The protein operates within amino-acid biosynthesis; L-arginine biosynthesis [regulation]. Its function is as follows. Regulates arginine biosynthesis genes. This chain is Arginine repressor, found in Erwinia tasmaniensis (strain DSM 17950 / CFBP 7177 / CIP 109463 / NCPPB 4357 / Et1/99).